Reading from the N-terminus, the 220-residue chain is ATP phosphoribosyltransferase (220 aa).

This sequence belongs to the ATP phosphoribosyltransferase family. Short subfamily. In terms of assembly, heteromultimer composed of HisG and HisZ subunits.

It is found in the cytoplasm. It catalyses the reaction 1-(5-phospho-beta-D-ribosyl)-ATP + diphosphate = 5-phospho-alpha-D-ribose 1-diphosphate + ATP. It participates in amino-acid biosynthesis; L-histidine biosynthesis; L-histidine from 5-phospho-alpha-D-ribose 1-diphosphate: step 1/9. Functionally, catalyzes the condensation of ATP and 5-phosphoribose 1-diphosphate to form N'-(5'-phosphoribosyl)-ATP (PR-ATP). Has a crucial role in the pathway because the rate of histidine biosynthesis seems to be controlled primarily by regulation of HisG enzymatic activity. This is ATP phosphoribosyltransferase from Anaeromyxobacter sp. (strain Fw109-5).